Consider the following 132-residue polypeptide: Myelin P2 protein (132 aa).

At Ser2 the chain carries N-acetylserine. A (9Z)-octadecenoate-binding site is contributed by Arg107. Arg107 provides a ligand contact to hexadecanoate. Cys118 and Cys125 form a disulfide bridge. Arg127–Tyr129 is a (9Z)-octadecenoate binding site. Arg127 to Tyr129 provides a ligand contact to hexadecanoate.

Belongs to the calycin superfamily. Fatty-acid binding protein (FABP) family. Monomer.

It is found in the cytoplasm. Its function is as follows. May play a role in lipid transport protein in Schwann cells. May bind cholesterol. The chain is Myelin P2 protein (PMP2) from Bos taurus (Bovine).